Reading from the N-terminus, the 388-residue chain is Succinate--CoA ligase [ADP-forming] subunit beta (388 aa).

Residues K46, 53-55 (GRG), E99, C102, and E107 contribute to the ATP site. Mg(2+) contacts are provided by N199 and D213. Substrate-binding positions include N264 and 321–323 (GIV).

This sequence belongs to the succinate/malate CoA ligase beta subunit family. As to quaternary structure, heterotetramer of two alpha and two beta subunits. It depends on Mg(2+) as a cofactor.

The catalysed reaction is succinate + ATP + CoA = succinyl-CoA + ADP + phosphate. It catalyses the reaction GTP + succinate + CoA = succinyl-CoA + GDP + phosphate. The protein operates within carbohydrate metabolism; tricarboxylic acid cycle; succinate from succinyl-CoA (ligase route): step 1/1. Succinyl-CoA synthetase functions in the citric acid cycle (TCA), coupling the hydrolysis of succinyl-CoA to the synthesis of either ATP or GTP and thus represents the only step of substrate-level phosphorylation in the TCA. The beta subunit provides nucleotide specificity of the enzyme and binds the substrate succinate, while the binding sites for coenzyme A and phosphate are found in the alpha subunit. This is Succinate--CoA ligase [ADP-forming] subunit beta from Actinobacillus pleuropneumoniae serotype 3 (strain JL03).